The sequence spans 513 residues: Gluconokinase (513 aa).

ATP contacts are provided by residues lysine 16, threonine 261, glycine 300, and glycine 412–serine 416.

It belongs to the FGGY kinase family.

It carries out the reaction D-gluconate + ATP = 6-phospho-D-gluconate + ADP + H(+). Its pathway is carbohydrate acid metabolism; D-gluconate degradation. With respect to regulation, catabolite repression by gluconate. In Bacillus subtilis (strain 168), this protein is Gluconokinase (gntK).